Here is a 425-residue protein sequence, read N- to C-terminus: Serine--tRNA ligase (425 aa).

229–231 is a binding site for L-serine; sequence TSE. Residues 259–261 and Val-275 contribute to the ATP site; that span reads RKE. Residue Glu-282 participates in L-serine binding. 349–352 lines the ATP pocket; the sequence is EITS. Thr-384 is an L-serine binding site.

This sequence belongs to the class-II aminoacyl-tRNA synthetase family. Type-1 seryl-tRNA synthetase subfamily. As to quaternary structure, homodimer. The tRNA molecule binds across the dimer.

It is found in the cytoplasm. It catalyses the reaction tRNA(Ser) + L-serine + ATP = L-seryl-tRNA(Ser) + AMP + diphosphate + H(+). The enzyme catalyses tRNA(Sec) + L-serine + ATP = L-seryl-tRNA(Sec) + AMP + diphosphate + H(+). Its pathway is aminoacyl-tRNA biosynthesis; selenocysteinyl-tRNA(Sec) biosynthesis; L-seryl-tRNA(Sec) from L-serine and tRNA(Sec): step 1/1. Catalyzes the attachment of serine to tRNA(Ser). Is also able to aminoacylate tRNA(Sec) with serine, to form the misacylated tRNA L-seryl-tRNA(Sec), which will be further converted into selenocysteinyl-tRNA(Sec). This is Serine--tRNA ligase from Borreliella afzelii (strain PKo) (Borrelia afzelii).